The sequence spans 374 residues: DNA-directed RNA polymerase subunit alpha (374 aa).

Residues 1-270 are alpha N-terminal domain (alpha-NTD); sequence MIFDEDSSSV…DQFQQFINFD (270 aa). The alpha C-terminal domain (alpha-CTD) stretch occupies residues 282–374; it reads KDVLPYDSNL…ESLSKQYSEE (93 aa).

This sequence belongs to the RNA polymerase alpha chain family. In terms of assembly, homodimer. The RNAP catalytic core consists of 2 alpha, 1 beta, 1 beta' and 1 omega subunit. When a sigma factor is associated with the core the holoenzyme is formed, which can initiate transcription.

The enzyme catalyses RNA(n) + a ribonucleoside 5'-triphosphate = RNA(n+1) + diphosphate. Functionally, DNA-dependent RNA polymerase catalyzes the transcription of DNA into RNA using the four ribonucleoside triphosphates as substrates. The polypeptide is DNA-directed RNA polymerase subunit alpha (Ehrlichia ruminantium (strain Gardel)).